Reading from the N-terminus, the 374-residue chain is P2Y purinoceptor 11 (374 aa).

The Extracellular segment spans residues 1 to 29 (MAANVSGAKSCPANFLAAADDKLSGFQGD). The N-linked (GlcNAc...) asparagine glycan is linked to asparagine 4. Residues 30–50 (FLWPILVVEFLVAVASNGLAL) traverse the membrane as a helical segment. Topologically, residues 51 to 64 (YRFSIRKQRPWHPA) are cytoplasmic. A helical membrane pass occupies residues 65 to 85 (VVFSVQLAVSDLLCALTLPPL). Topologically, residues 86–116 (AAYLYPPKHWRYGEAACRLERFLFTCNLLGS) are extracellular. Cysteine 102 and cysteine 180 are joined by a disulfide. Residues 117–137 (VIFITCISLNRYLGIVHPFFA) form a helical membrane-spanning segment. Over 138 to 146 (RSHLRPKHA) the chain is Cytoplasmic. Residues 147–167 (WAVSAAGWVLAALLAMPTLSF) traverse the membrane as a helical segment. At 168-206 (SHLKRPQQGAGNCSVARPEACIKCLGTADHGLAAYRAYS) the chain is on the extracellular side. An N-linked (GlcNAc...) asparagine glycan is attached at asparagine 179. A helical transmembrane segment spans residues 207–227 (LVLAGLGCGLPLLLTLAAYGA). Topologically, residues 228-245 (LGRAVLRSPGMTVAEKLR) are cytoplasmic. The helical transmembrane segment at 246-266 (VAALVASGVALYASSYVPYHI) threads the bilayer. Residues 267 to 308 (MRVLNVDARRRWSTRCPSFADIAQATAALELGPYVGYQVMRG) are Extracellular-facing. The helical transmembrane segment at 309–329 (LMPLAFCVHPLLYMAAVPSLG) threads the bilayer. Topologically, residues 330–374 (CCCRHCPGYRDSWNPEDAKSTGQALPLNATAAPKPSEPQSRELSQ) are cytoplasmic. Residues 345-374 (EDAKSTGQALPLNATAAPKPSEPQSRELSQ) form a disordered region.

The protein belongs to the G-protein coupled receptor 1 family. Highest expression in liver and spleen.

The protein localises to the cell membrane. Receptor for ATP and ADP coupled to G-proteins that activate both phosphatidylinositol-calcium and adenylyl cyclase second messenger systems. Not activated by UTP or UDP. In Homo sapiens (Human), this protein is P2Y purinoceptor 11 (P2RY11).